A 462-amino-acid polypeptide reads, in one-letter code: Spermatogenesis- and oogenesis-specific basic helix-loop-helix-containing protein 2 (462 aa).

A bHLH domain is found at 200 to 251; sequence KASFLHSSKEKLRRERIKFCCEQLRTLLPYVKGRKSDVASVIEATVDYVKQV. The segment at 422–462 is disordered; it reads PASSRTASSSIFRGFRESDSGHQASQQPTGPSLQPQDSSYF. Positions 442–462 are enriched in polar residues; sequence GHQASQQPTGPSLQPQDSSYF.

The protein localises to the nucleus. Probable transcription factor, which may be involved in spermatogenesis and oogenesis. The polypeptide is Spermatogenesis- and oogenesis-specific basic helix-loop-helix-containing protein 2 (Sohlh2) (Rattus norvegicus (Rat)).